A 621-amino-acid polypeptide reads, in one-letter code: MEFPGGNDNYLTITGPSHPFLSGAETFHTPSLGDEEFEIPPISLDSDPSLAVSDVVGHFDDLADPSSSQDGSFSAQYGVQTLDMPVGMTHGLMEQGGGLLSGGLTMDLDHSIGTQYSANPPVTIDVPMTDMTSGLMGHSQLTTIDQSELSSQLGLSLGGGTILPPAQSPEDRLSTTPSPTSSLHEDGVEDFRRQLPSQKTVVVEAGKKQKAPKKRKKKDPNEPQKPVSAYALFFRDTQAAIKGQNPNATFGEVSKIVASMWDSLGEEQKQVYKRKTEAAKKEYLKALAAYKDNQECQATVETVELDPAPPSQTPSPPPMATVDPASPAPASIEPPALSPSIVVNSTLSSYVANQASSGAGGQPNITKLIITKQMLPSSITMSQGGMVTVIPATVVTSRGLQLGQTSTATIQPSQQAQIVTRSVLQAAAAAAAAASMQLPPPRLQPPPLQQMPQPPTQQQVTILQQPPPLQAMQQPPPQKVRINLQQQPPPLQIKSVPLPTLKMQTTLVPPTVESSPERPMNNSPEAHTVEATSPETICEMITDVVPEVESPSQMDVELVSGSPVALSPQPRCVRSGCENPPIVSKDWDNEYCSNECVVKHCRDVFLAWVASRNSNTVVFVK.

Disordered regions lie at residues 153–227 (LGLS…QKPV) and 305–333 (LDPA…ASIE). A Phosphothreonine modification is found at Thr176. Phosphoserine is present on residues Ser178, Ser181, and Ser182. Residues 183–193 (LHEDGVEDFRR) show a composition bias toward basic and acidic residues. Positions 208–218 (KQKAPKKRKKK) are enriched in basic residues. The Nuclear localization signal motif lies at 213-218 (KKRKKK). Residues 223–291 (PQKPVSAYAL…EYLKALAAYK (69 aa)) constitute a DNA-binding region (HMG box). The segment covering 307–319 (PAPPSQTPSPPPM) has biased composition (pro residues). Thr313 is subject to Phosphothreonine. Ser315 is subject to Phosphoserine. The span at 320-333 (ATVDPASPAPASIE) shows a compositional bias: low complexity. Residue Arg481 is modified to Asymmetric dimethylarginine. Positions 510 to 529 (PTVESSPERPMNNSPEAHTV) are disordered. Phosphoserine is present on residues Ser533, Ser550, Ser552, Ser560, Ser562, and Ser567.

Component of the PNUTS-PP1 phosphatase complex, composed of PPP1R10/PNUTS, TOX4, WDR82 and PPP1CA or PPP1CB or PPP1CC. Interacts with PPP1R10/PNUTS. Interacts with FOXO1 and CREB1 (increased by cAMP); FOXO1 and CREB1 are required for full induction of TOX4-dependent activity and the interactions are inhibited by insulin.

It localises to the nucleus. Its subcellular location is the chromosome. With respect to regulation, in liver, recruited to target gene promoters following treatment with dexamethasone and cAMP. Binding is decreased in presence of insulin. In terms of biological role, transcription factor that modulates cell fate reprogramming from the somatic state to the pluripotent and neuronal fate. In liver, controls the expression of hormone-regulated gluconeogenic genes such as G6PC1 and PCK1. This regulation is independent of the insulin receptor activation. Also acts as a regulatory component of protein phosphatase 1 (PP1) complexes. Component of the PNUTS-PP1 protein phosphatase complex, a PP1 complex that regulates RNA polymerase II transcription pause-release. PNUTS-PP1 also plays a role in the control of chromatin structure and cell cycle progression during the transition from mitosis into interphase. The chain is TOX high mobility group box family member 4 (TOX4) from Pongo abelii (Sumatran orangutan).